Here is a 321-residue protein sequence, read N- to C-terminus: Quinol oxidase subunit 2 (321 aa).

Residues 1-25 (MIFLFRALKPLLVLALLTVVFVLGG) form the signal peptide. Cys26 carries the N-palmitoyl cysteine lipid modification. Cys26 is lipidated: S-diacylglycerol cysteine. 2 helical membrane-spanning segments follow: residues 49-69 (SIGF…IILV) and 90-110 (TFLE…LSVP). Residues 294 to 321 (QAVSPHSKTDPFENVKKNEFKKSDDTEE) form a disordered region. A compositionally biased stretch (basic and acidic residues) spans 300-321 (SKTDPFENVKKNEFKKSDDTEE).

This sequence belongs to the cytochrome c oxidase subunit 2 family. In terms of assembly, interacts with FloT.

The protein resides in the cell membrane. The protein localises to the membrane raft. It carries out the reaction 2 a quinol + O2 = 2 a quinone + 2 H2O. Catalyzes quinol oxidation with the concomitant reduction of oxygen to water. Major component for energy conversion during vegetative growth. Subunit II transfers the electrons from a quinol to the binuclear center of the catalytic subunit I. The protein is Quinol oxidase subunit 2 (qoxA) of Bacillus subtilis (strain 168).